The sequence spans 630 residues: Probable potassium transport system protein Kup (630 aa).

Helical transmembrane passes span 19-39 (GLIGVLGVVYGDIGTSPLYAV), 59-79 (LLSLIFWALIITVTIKYVLLI), 108-128 (WIIGIIGICGAGLFFGDATIT), 145-165 (PGLKEFVLPIAIAVILVLFFV), 173-193 (VGGAFGPIMVIWFVVIGALGL), 220-240 (LLAFIALGSVVLAVTGAEALY), 255-275 (WLFFVLPCLLLNYFGQGALVI), 284-304 (PFFFLLPHALVVPMVILATIA), 345-365 (IYVPPVNSFLFVVVVLLVLGF), 374-394 (AYGIAVTGTFLSTNALAAFVY), 405-425 (TVLVFGAIGLVDFAFFSSNVL), and 427-447 (VFDGGWVPLAIGFSLITVMTT).

It belongs to the HAK/KUP transporter (TC 2.A.72) family.

The protein resides in the cell inner membrane. The catalysed reaction is K(+)(in) + H(+)(in) = K(+)(out) + H(+)(out). Its function is as follows. Transport of potassium into the cell. Likely operates as a K(+):H(+) symporter. This is Probable potassium transport system protein Kup from Acidiphilium cryptum (strain JF-5).